Reading from the N-terminus, the 499-residue chain is Glycerol kinase (499 aa).

Residue T17 participates in ADP binding. Positions 17, 18, and 19 each coordinate ATP. T17 contributes to the sn-glycerol 3-phosphate binding site. ADP is bound at residue R21. Sn-glycerol 3-phosphate-binding residues include R87, E88, Y139, and D243. Residues R87, E88, Y139, D243, and Q244 each contribute to the glycerol site. Positions 265 and 308 each coordinate ADP. Residues T265, G308, Q312, and G409 each contribute to the ATP site. Positions 409 and 413 each coordinate ADP.

This sequence belongs to the FGGY kinase family.

It catalyses the reaction glycerol + ATP = sn-glycerol 3-phosphate + ADP + H(+). Its pathway is polyol metabolism; glycerol degradation via glycerol kinase pathway; sn-glycerol 3-phosphate from glycerol: step 1/1. Its activity is regulated as follows. Inhibited by fructose 1,6-bisphosphate (FBP). Its function is as follows. Key enzyme in the regulation of glycerol uptake and metabolism. Catalyzes the phosphorylation of glycerol to yield sn-glycerol 3-phosphate. The chain is Glycerol kinase from Pseudomonas putida (strain ATCC 700007 / DSM 6899 / JCM 31910 / BCRC 17059 / LMG 24140 / F1).